We begin with the raw amino-acid sequence, 437 residues long: Peptidyl-prolyl cis-trans isomerase CYP38, chloroplastic (437 aa).

Residues 1-36 (MAAAFASLPTFSVVNSSRFPRRRIGFSCSKKPLEVR) constitute a chloroplast transit peptide. Residues 37 to 92 (CSSGNTRYTKQRGAFTSLKECAISLALSVGLMVSVPSIALPPNAHAVANPVIPDVS) constitute a thylakoid transit peptide. In terms of domain architecture, PPIase cyclophilin-type spans 245–437 (VKIKDNPNIE…LANPSYKIAG (193 aa)).

In terms of tissue distribution, ubiquitous. Lower levels of expression in roots.

The protein localises to the plastid. The protein resides in the chloroplast thylakoid lumen. The enzyme catalyses [protein]-peptidylproline (omega=180) = [protein]-peptidylproline (omega=0). Required for the assembly and stabilization of PSII, but has no PPIases activity. This chain is Peptidyl-prolyl cis-trans isomerase CYP38, chloroplastic (CYP38), found in Arabidopsis thaliana (Mouse-ear cress).